The following is a 67-amino-acid chain: Large ribosomal subunit protein bL31 (67 aa).

This sequence belongs to the bacterial ribosomal protein bL31 family. Type A subfamily. Part of the 50S ribosomal subunit.

Its function is as follows. Binds the 23S rRNA. The chain is Large ribosomal subunit protein bL31 from Finegoldia magna (strain ATCC 29328 / DSM 20472 / WAL 2508) (Peptostreptococcus magnus).